A 311-amino-acid chain; its full sequence is Apolipoprotein E (311 aa).

A signal peptide spans 1 to 18; the sequence is MKALWAVLLVTLLTGCLA. 8 consecutive repeat copies span residues 72 to 93, 94 to 115, 116 to 137, 138 to 159, 160 to 181, 182 to 203, 204 to 225, and 226 to 247. Positions 72-247 are 8 X 22 AA approximate tandem repeats; sequence ALMEDTMTEV…RLEEVREHME (176 aa). At M135 the chain carries Methionine sulfoxide. S139 bears the Phosphoserine mark. Residues 150 to 160 form an LDL and other lipoprotein receptors binding region; sequence HLRKMRKRLMR. Heparin is bound at residue 154-157; that stretch reads MRKR. A lipid-binding and lipoprotein association region spans residues 202-282; sequence TANLGAGAAQ…GWFEPIVEDM (81 aa). 221 to 228 is a heparin binding site; it reads GDRIRGRL. A homooligomerization region spans residues 258–311; the sequence is QQIRLQAEIFQARLKGWFEPIVEDMHRQWANLMEKIQASVATNPIITPVAQENQ. The tract at residues 270–282 is specificity for association with VLDL; it reads RLKGWFEPIVEDM.

The protein belongs to the apolipoprotein A1/A4/E family. As to quaternary structure, homotetramer. May interact with ABCA1; functionally associated with ABCA1 in the biogenesis of HDLs. May interact with APP/A4 amyloid-beta peptide; the interaction is extremely stable in vitro but its physiological significance is unclear. May interact with MAPT. May interact with MAP2. In the cerebrospinal fluid, interacts with secreted SORL1. Interacts with PMEL; this allows the loading of PMEL luminal fragment on ILVs to induce fibril nucleation. APOE exists as multiple glycosylated and sialylated glycoforms within cells and in plasma. The extent of glycosylation and sialylation are tissue and context specific. Post-translationally, glycated in plasma VLDL. In terms of processing, phosphorylated by FAM20C in the extracellular medium.

Its subcellular location is the secreted. It localises to the extracellular space. The protein localises to the extracellular matrix. The protein resides in the extracellular vesicle. It is found in the endosome. Its subcellular location is the multivesicular body. Its function is as follows. APOE is an apolipoprotein, a protein associating with lipid particles, that mainly functions in lipoprotein-mediated lipid transport between organs via the plasma and interstitial fluids. APOE is a core component of plasma lipoproteins and is involved in their production, conversion and clearance. Apolipoproteins are amphipathic molecules that interact both with lipids of the lipoprotein particle core and the aqueous environment of the plasma. As such, APOE associates with chylomicrons, chylomicron remnants, very low density lipoproteins (VLDL) and intermediate density lipoproteins (IDL) but shows a preferential binding to high-density lipoproteins (HDL). It also binds a wide range of cellular receptors including the LDL receptor/LDLR and the very low-density lipoprotein receptor/VLDLR that mediate the cellular uptake of the APOE-containing lipoprotein particles. Finally, APOE also has a heparin-binding activity and binds heparan-sulfate proteoglycans on the surface of cells, a property that supports the capture and the receptor-mediated uptake of APOE-containing lipoproteins by cells. In Mus musculus (Mouse), this protein is Apolipoprotein E (Apoe).